Here is a 432-residue protein sequence, read N- to C-terminus: MQLLTIGINHHTAPVALRERVAFPLEQIKPALSTFKSVFLGHPAPNAPEAAILSTCNRTELYCATNDRAARDAAIRWMSDYHRIPADELAPHVYALPQSEAVRHAFRVASGLDSMVLGETQILGQMKNAVRTASEAGSLGTYLNQLFQRTFAVAKEVRGTTEIGAQSVSMAAAAVRLAQRIFEQVAQQRVLFIGAGEMIELCATHFAAQGPRELVVANRTAERGAKLAERFGGRAMPLADLPARMHEFDIIVSCTASTLPIIGLGAVERAVKARRHRPIFMVDLAVPRDIEPEVGKLKDVFLYTVDDLGAIVREGNASRQAAVAQAEAIIETRVQNFMQWLDARSIVPVIRHMHTQADALRRAEVERARKMLARGDDPDAVLDALSQALTNKLIHGPTSALNRANGADRDSLIDLMRGFYQHAPRSSDTSDR.

Substrate contacts are provided by residues 55-58 (TCNR), S114, 119-121 (ETQ), and Q125. Catalysis depends on C56, which acts as the Nucleophile. 194–199 (GAGEMI) provides a ligand contact to NADP(+).

It belongs to the glutamyl-tRNA reductase family. In terms of assembly, homodimer.

It carries out the reaction (S)-4-amino-5-oxopentanoate + tRNA(Glu) + NADP(+) = L-glutamyl-tRNA(Glu) + NADPH + H(+). The protein operates within porphyrin-containing compound metabolism; protoporphyrin-IX biosynthesis; 5-aminolevulinate from L-glutamyl-tRNA(Glu): step 1/2. Its function is as follows. Catalyzes the NADPH-dependent reduction of glutamyl-tRNA(Glu) to glutamate 1-semialdehyde (GSA). The chain is Glutamyl-tRNA reductase from Burkholderia pseudomallei (strain 1710b).